The sequence spans 243 residues: DNA repair protein RecO (243 aa).

It belongs to the RecO family.

In terms of biological role, involved in DNA repair and RecF pathway recombination. This Chlamydia trachomatis serovar L2 (strain ATCC VR-902B / DSM 19102 / 434/Bu) protein is DNA repair protein RecO.